The following is a 207-amino-acid chain: Ribosomal RNA small subunit methyltransferase G (207 aa).

Residues Gly-73, Leu-78, 124-125 (VE), and Arg-139 contribute to the S-adenosyl-L-methionine site.

The protein belongs to the methyltransferase superfamily. RNA methyltransferase RsmG family.

It localises to the cytoplasm. The catalysed reaction is guanosine(527) in 16S rRNA + S-adenosyl-L-methionine = N(7)-methylguanosine(527) in 16S rRNA + S-adenosyl-L-homocysteine. In terms of biological role, specifically methylates the N7 position of guanine in position 527 of 16S rRNA. The sequence is that of Ribosomal RNA small subunit methyltransferase G from Escherichia fergusonii (strain ATCC 35469 / DSM 13698 / CCUG 18766 / IAM 14443 / JCM 21226 / LMG 7866 / NBRC 102419 / NCTC 12128 / CDC 0568-73).